A 307-amino-acid polypeptide reads, in one-letter code: Ribonuclease Z (307 aa).

7 residues coordinate Zn(2+): histidine 63, histidine 65, aspartate 67, histidine 68, histidine 141, aspartate 208, and histidine 266. The Proton acceptor role is filled by aspartate 67.

Belongs to the RNase Z family. Homodimer. It depends on Zn(2+) as a cofactor.

The enzyme catalyses Endonucleolytic cleavage of RNA, removing extra 3' nucleotides from tRNA precursor, generating 3' termini of tRNAs. A 3'-hydroxy group is left at the tRNA terminus and a 5'-phosphoryl group is left at the trailer molecule.. Functionally, zinc phosphodiesterase, which displays some tRNA 3'-processing endonuclease activity. Probably involved in tRNA maturation, by removing a 3'-trailer from precursor tRNA. The sequence is that of Ribonuclease Z from Chlamydia pneumoniae (Chlamydophila pneumoniae).